Here is a 518-residue protein sequence, read N- to C-terminus: UNC5C-like protein (518 aa).

Residues 1–10 are Extracellular-facing; it reads MSPQESSVQP. The chain crosses the membrane as a helical; Signal-anchor for type III membrane protein span at residues 11-31; the sequence is SQFLLLVGIPVASALLLAQCL. Residues 32–518 are Cytoplasmic-facing; sequence RWHCCQWLPG…NHGLELDEKL (487 aa). A ZU5 domain is found at 102–237; sequence VFSAREVDHR…FSLYTCVLEA (136 aa). The tract at residues 186–400 is interaction with RELA and NFKB1; that stretch reads QQPSQACAYS…ETWAVPPPVS (215 aa). Residues 208–235 are peptidase S68; sequence PLGQPGTHISRDECRILLSHFSLYTCVL. Residues histidine 227 and serine 229 contribute to the active site. In terms of domain architecture, Death spans 415-494; that stretch reads QLQMLLEPNS…SAIQNYLNRS (80 aa).

The protein belongs to the unc-5 family. In terms of assembly, interacts with p65/RELA and NFKB1.

It localises to the membrane. The protein localises to the cytoplasm. In terms of biological role, inhibits NF-kappa-B-dependent transcription by impairing NF-kappa-B binding to its targets. The polypeptide is UNC5C-like protein (Unc5cl) (Mus musculus (Mouse)).